Here is a 387-residue protein sequence, read N- to C-terminus: 8-amino-7-oxononanoate synthase (387 aa).

A pyridoxal 5'-phosphate-binding site is contributed by 109 to 110 (GY). His-134 is a binding site for substrate. Residues Ser-182, His-214, and Thr-242 each contribute to the pyridoxal 5'-phosphate site. At Lys-245 the chain carries N6-(pyridoxal phosphate)lysine. Residue Thr-359 participates in substrate binding.

The protein belongs to the class-II pyridoxal-phosphate-dependent aminotransferase family. BioF subfamily. Homodimer. It depends on pyridoxal 5'-phosphate as a cofactor.

It carries out the reaction 6-carboxyhexanoyl-[ACP] + L-alanine + H(+) = (8S)-8-amino-7-oxononanoate + holo-[ACP] + CO2. It participates in cofactor biosynthesis; biotin biosynthesis. Functionally, catalyzes the decarboxylative condensation of pimeloyl-[acyl-carrier protein] and L-alanine to produce 8-amino-7-oxononanoate (AON), [acyl-carrier protein], and carbon dioxide. This Haemophilus ducreyi (strain 35000HP / ATCC 700724) protein is 8-amino-7-oxononanoate synthase.